The chain runs to 150 residues: Urease accessory protein UreE (150 aa).

This sequence belongs to the UreE family.

The protein localises to the cytoplasm. Its function is as follows. Involved in urease metallocenter assembly. Binds nickel. Probably functions as a nickel donor during metallocenter assembly. This is Urease accessory protein UreE from Staphylococcus aureus (strain Mu3 / ATCC 700698).